A 208-amino-acid polypeptide reads, in one-letter code: Probable molybdenum cofactor guanylyltransferase (208 aa).

GTP-binding positions include 12 to 14, K24, D72, and D101; that span reads IAG. D101 is a Mg(2+) binding site.

This sequence belongs to the MobA family. The cofactor is Mg(2+).

The protein localises to the cytoplasm. The enzyme catalyses Mo-molybdopterin + GTP + H(+) = Mo-molybdopterin guanine dinucleotide + diphosphate. Its function is as follows. Transfers a GMP moiety from GTP to Mo-molybdopterin (Mo-MPT) cofactor (Moco or molybdenum cofactor) to form Mo-molybdopterin guanine dinucleotide (Mo-MGD) cofactor. The polypeptide is Probable molybdenum cofactor guanylyltransferase (Chloroflexus aggregans (strain MD-66 / DSM 9485)).